Reading from the N-terminus, the 256-residue chain is 5'-nucleotidase SurE (256 aa).

Residues Asp-8, Asp-9, Ser-40, and Asn-92 each contribute to the a divalent metal cation site.

Belongs to the SurE nucleotidase family. Requires a divalent metal cation as cofactor.

Its subcellular location is the cytoplasm. The enzyme catalyses a ribonucleoside 5'-phosphate + H2O = a ribonucleoside + phosphate. Functionally, nucleotidase that shows phosphatase activity on nucleoside 5'-monophosphates. The protein is 5'-nucleotidase SurE of Allorhizobium ampelinum (strain ATCC BAA-846 / DSM 112012 / S4) (Agrobacterium vitis (strain S4)).